A 355-amino-acid polypeptide reads, in one-letter code: Uroporphyrinogen decarboxylase (355 aa).

Substrate is bound by residues 27-31, Asp77, Tyr154, Thr209, and His328; that span reads RQAGR.

It belongs to the uroporphyrinogen decarboxylase family. As to quaternary structure, homodimer.

The protein resides in the cytoplasm. It catalyses the reaction uroporphyrinogen III + 4 H(+) = coproporphyrinogen III + 4 CO2. It participates in porphyrin-containing compound metabolism; protoporphyrin-IX biosynthesis; coproporphyrinogen-III from 5-aminolevulinate: step 4/4. In terms of biological role, catalyzes the decarboxylation of four acetate groups of uroporphyrinogen-III to yield coproporphyrinogen-III. This Vibrio campbellii (strain ATCC BAA-1116) protein is Uroporphyrinogen decarboxylase.